A 465-amino-acid chain; its full sequence is Glutamate--tRNA ligase (465 aa).

The 'HIGH' region motif lies at Pro-5–Gly-15. Zn(2+) is bound by residues Cys-96, Cys-98, Cys-118, and Asp-120. The 'KMSKS' region signature appears at Lys-228 to Arg-232. Lys-231 is an ATP binding site.

This sequence belongs to the class-I aminoacyl-tRNA synthetase family. Glutamate--tRNA ligase type 1 subfamily. As to quaternary structure, monomer. Zn(2+) serves as cofactor.

The protein resides in the cytoplasm. It catalyses the reaction tRNA(Glu) + L-glutamate + ATP = L-glutamyl-tRNA(Glu) + AMP + diphosphate. Catalyzes the attachment of glutamate to tRNA(Glu) in a two-step reaction: glutamate is first activated by ATP to form Glu-AMP and then transferred to the acceptor end of tRNA(Glu). This chain is Glutamate--tRNA ligase, found in Salinispora tropica (strain ATCC BAA-916 / DSM 44818 / JCM 13857 / NBRC 105044 / CNB-440).